A 300-amino-acid polypeptide reads, in one-letter code: ETS homologous factor (300 aa).

The PNT domain maps to 29–115 (PTCNVSSGFF…SNLQHLKWNG (87 aa)). A disordered region spans residues 181–203 (VAESPDMKKEQDHPVKSHTKKHN). The segment covering 185–195 (PDMKKEQDHPV) has biased composition (basic and acidic residues). Positions 207-289 (THLWEFIRDI…DGRRLVYKFG (83 aa)) form a DNA-binding region, ETS.

The protein belongs to the ETS family. As to expression, highly expressed in kidney and lung, weakly in skeletal muscle, heart, and liver, and not detected in brain, spleen or testis.

Its subcellular location is the nucleus. In terms of biological role, transcriptional activator that may play a role in regulating epithelial cell differentiation and proliferation. May act as a repressor for a specific subset of ETS/AP-1-responsive genes, and as a modulator of the nuclear response to mitogen-activated protein kinase signaling cascades. Binds to DNA sequences containing the consensus nucleotide core sequence GGAA. Involved in regulation of TNFRSF10B/DR5 expression through Ets-binding sequences on the TNFRSF10B/DR5 promoter. The sequence is that of ETS homologous factor from Mus musculus (Mouse).